A 533-amino-acid polypeptide reads, in one-letter code: Probable lipid II flippase MurJ (533 aa).

The next 13 membrane-spanning stretches (helical) occupy residues 25–45 (ETLM…YAAF), 90–110 (VLFS…PLLV), 131–151 (LAAV…MSGM), 158–178 (FFAA…ALFY), 192–212 (YLSW…YIGV), 233–253 (LLLL…NLVI), 274–294 (IYQL…LPEL), 316–336 (FVLF…DDII), 350–370 (TTLV…FVLI), 389–409 (YTAI…PVLA), 412–432 (GIAL…FVTL), 449–469 (AMLL…SHRW), and 484–504 (GVLG…AFLI).

Belongs to the MurJ/MviN family.

The protein resides in the cell inner membrane. It functions in the pathway cell wall biogenesis; peptidoglycan biosynthesis. Involved in peptidoglycan biosynthesis. Transports lipid-linked peptidoglycan precursors from the inner to the outer leaflet of the cytoplasmic membrane. This chain is Probable lipid II flippase MurJ, found in Rhizobium tropici.